Consider the following 135-residue polypeptide: FK506-binding protein 2 (135 aa).

A signal peptide spans 1 to 17 (MLLKSLFLLFLTAIAFA). The region spanning 40–127 (GDLISVHYEG…VFVAELVDIA (88 aa)) is the PPIase FKBP-type domain. Residues 132–135 (HDEL) carry the Prevents secretion from ER motif.

Belongs to the FKBP-type PPIase family. FKBP2 subfamily.

It localises to the endoplasmic reticulum. It catalyses the reaction [protein]-peptidylproline (omega=180) = [protein]-peptidylproline (omega=0). Inhibited by both FK506 and rapamycin. PPIases accelerate the folding of proteins. It catalyzes the cis-trans isomerization of proline imidic peptide bonds in oligopeptides. This Debaryomyces hansenii (strain ATCC 36239 / CBS 767 / BCRC 21394 / JCM 1990 / NBRC 0083 / IGC 2968) (Yeast) protein is FK506-binding protein 2 (FPR2).